A 420-amino-acid chain; its full sequence is Ribosome biogenesis protein WDR12 homolog (420 aa).

The interval 10-92 is ubiquitin-like (UBL) domain; it reads VQVHLKTKQE…EDAIEIEYVE (83 aa). WD repeat units lie at residues 104–142, 143–185, 192–231, 250–288, 290–329, 335–375, and 379–417; these read LHDD…LTIS, GHTA…NAVD, GHER…GVEG, GHRE…IKTE, STNK…GSVV, GHNA…APLY, and GHGD…AEDT.

Belongs to the WD repeat WDR12/YTM1 family.

The protein localises to the nucleus. It is found in the nucleolus. It localises to the nucleoplasm. Required for maturation of ribosomal RNAs and formation of the large ribosomal subunit. This is Ribosome biogenesis protein WDR12 homolog from Drosophila sechellia (Fruit fly).